Reading from the N-terminus, the 269-residue chain is JmjC domain-containing protein 8 (269 aa).

The first 24 residues, 1–24 (MAAAGRRGLLLLFVLWMMVTVILP), serve as a signal peptide directing secretion. 3 N-linked (GlcNAc...) asparagine glycosylation sites follow: Asn135, Asn145, and Asn214. The region spanning 136-269 (DTLYFFGDNN…TSVFISTFLG (134 aa)) is the JmjC domain.

In terms of assembly, oligomer. Dimer. Interacts with PKM; regulates angiogenesis and metabolism. In terms of processing, N-glycosylated.

It localises to the endoplasmic reticulum lumen. The protein localises to the cytoplasm. Its function is as follows. Functions as a positive regulator of TNF-induced NF-kappaB signaling. Regulates angiogenesis and cellular metabolism through interaction with PKM. The chain is JmjC domain-containing protein 8 from Mus musculus (Mouse).